The primary structure comprises 111 residues: Nucleoid-associated protein TTE0040 (111 aa).

It belongs to the YbaB/EbfC family. As to quaternary structure, homodimer.

The protein localises to the cytoplasm. The protein resides in the nucleoid. Functionally, binds to DNA and alters its conformation. May be involved in regulation of gene expression, nucleoid organization and DNA protection. The chain is Nucleoid-associated protein TTE0040 from Caldanaerobacter subterraneus subsp. tengcongensis (strain DSM 15242 / JCM 11007 / NBRC 100824 / MB4) (Thermoanaerobacter tengcongensis).